The sequence spans 490 residues: 2-succinylbenzoate--CoA ligase (490 aa).

The protein belongs to the ATP-dependent AMP-binding enzyme family. MenE subfamily.

It catalyses the reaction 2-succinylbenzoate + ATP + CoA = 2-succinylbenzoyl-CoA + AMP + diphosphate. The protein operates within quinol/quinone metabolism; 1,4-dihydroxy-2-naphthoate biosynthesis; 1,4-dihydroxy-2-naphthoate from chorismate: step 5/7. Its pathway is quinol/quinone metabolism; menaquinone biosynthesis. Converts 2-succinylbenzoate (OSB) to 2-succinylbenzoyl-CoA (OSB-CoA). The polypeptide is 2-succinylbenzoate--CoA ligase (Geobacillus kaustophilus (strain HTA426)).